A 295-amino-acid chain; its full sequence is Nucleotide-binding protein MCA0739 (295 aa).

8-15 (GFSGSGKS) provides a ligand contact to ATP. A GTP-binding site is contributed by 60–63 (DARN).

The protein belongs to the RapZ-like family.

Functionally, displays ATPase and GTPase activities. The sequence is that of Nucleotide-binding protein MCA0739 from Methylococcus capsulatus (strain ATCC 33009 / NCIMB 11132 / Bath).